Reading from the N-terminus, the 65-residue chain is Alpha-like toxin Bom4 (65 aa).

The LCN-type CS-alpha/beta domain occupies 2–64 (RDAYIAQPEN…VPIRIPGKCH (63 aa)). 4 disulfides stabilise this stretch: Cys12-Cys63, Cys16-Cys36, Cys22-Cys46, and Cys26-Cys48.

Belongs to the long (4 C-C) scorpion toxin superfamily. Sodium channel inhibitor family. Alpha subfamily. In terms of tissue distribution, expressed by the venom gland.

The protein resides in the secreted. Alpha toxins bind voltage-independently at site-3 of sodium channels (Nav) and inhibit the inactivation of the activated channels, thereby blocking neuronal transmission. This alpha-like toxin is highly toxic to mice and insects. This chain is Alpha-like toxin Bom4, found in Buthus occitanus mardochei (Moroccan scorpion).